Consider the following 554-residue polypeptide: Phospholipase B-like protein E (554 aa).

A signal peptide spans 1-19 (MKLFILLIVIVFLISNSYS). Asn-113, Asn-140, Asn-231, Asn-302, Asn-340, and Asn-546 each carry an N-linked (GlcNAc...) asparagine glycan.

The protein belongs to the phospholipase B-like family.

The protein resides in the secreted. In terms of biological role, probable phospholipase. The chain is Phospholipase B-like protein E (plbE) from Dictyostelium discoideum (Social amoeba).